Here is an 88-residue protein sequence, read N- to C-terminus: Probable glutaredoxin ssr2061 (88 aa).

A disulfide bridge connects residues C15 and C18.

It belongs to the glutaredoxin family.

In terms of biological role, has a glutathione-disulfide oxidoreductase activity in the presence of NADPH and glutathione reductase. Reduces low molecular weight disulfides and proteins. The polypeptide is Probable glutaredoxin ssr2061 (Synechocystis sp. (strain ATCC 27184 / PCC 6803 / Kazusa)).